Reading from the N-terminus, the 75-residue chain is MEKKSIAGLCFLFLVLFVAQEVVVQSEAKTCENLVDTYRGPCFTTGSCDDHCKNKEHLLSGRCRDDVRCWCTRNC.

Positions 1-24 (MEKKSIAGLCFLFLVLFVAQEVVV) are cleaved as a signal peptide. 4 cysteine pairs are disulfide-bonded: Cys31-Cys75, Cys42-Cys63, Cys48-Cys69, and Cys52-Cys71.

It belongs to the DEFL family.

It is found in the secreted. Its function is as follows. This protein is required for germination. This chain is Defensin-like protein, found in Vigna unguiculata (Cowpea).